The following is a 64-amino-acid chain: Probable tautomerase lp_1712 (64 aa).

The active-site Proton acceptor; via imino nitrogen is Pro-2.

It belongs to the 4-oxalocrotonate tautomerase family.

This Lactiplantibacillus plantarum (strain ATCC BAA-793 / NCIMB 8826 / WCFS1) (Lactobacillus plantarum) protein is Probable tautomerase lp_1712.